The primary structure comprises 139 residues: D-ribose pyranase (139 aa).

Catalysis depends on His-20, which acts as the Proton donor. Substrate-binding positions include Asp-28, His-106, and 128 to 130; that span reads YAN.

Belongs to the RbsD / FucU family. RbsD subfamily. In terms of assembly, homodecamer.

Its subcellular location is the cytoplasm. It carries out the reaction beta-D-ribopyranose = beta-D-ribofuranose. The protein operates within carbohydrate metabolism; D-ribose degradation; D-ribose 5-phosphate from beta-D-ribopyranose: step 1/2. Functionally, catalyzes the interconversion of beta-pyran and beta-furan forms of D-ribose. The protein is D-ribose pyranase of Pectobacterium carotovorum subsp. carotovorum (strain PC1).